Consider the following 461-residue polypeptide: Spermidine coumaroyl-CoA acyltransferase (461 aa).

Residues H168 and D393 each act as proton acceptor in the active site.

The protein belongs to the plant acyltransferase family. Monomer. As to expression, mainly expressed in roots at low levels, specifically, in the root tip.

The enzyme catalyses 2 (E)-4-coumaroyl-CoA + spermidine = N(1),N(8)-bis(coumaroyl)-spermidine + 2 CoA + 2 H(+). It participates in amine and polyamine metabolism; spermidine metabolism. Functionally, spermidine coumaroyl-CoA acyltransferase that mediates the conversion of spermidine into dicoumaroyl-spermidine. The polypeptide is Spermidine coumaroyl-CoA acyltransferase (Arabidopsis thaliana (Mouse-ear cress)).